We begin with the raw amino-acid sequence, 148 residues long: MTESLSNSLKVQLRSADAKVPTKGSTTAAGYDIYASQPGVIPARGQGIAKTDISFTVPVGTYGRIAPRSGLAVKHGIQTGAGVVDRDYTGEVGIVLFNHSDKDFQINKGDRVAQLILEKIVEDAEIVVVESLEETQRGAGGFGSTGKN.

Residues Ser-69, Gly-82, Asp-85, Tyr-88, Arg-137, Phe-142, and Gly-143 each coordinate dUMP.

The protein belongs to the dUTPase family. As to quaternary structure, homotrimer. Requires Mg(2+) as cofactor.

The catalysed reaction is dUTP + H2O = dUMP + diphosphate + H(+). Its pathway is pyrimidine metabolism; dUMP biosynthesis; dUMP from dCTP (dUTP route): step 2/2. Its function is as follows. Involved in nucleotide metabolism via production of dUMP, the immediate precursor of thymidine nucleotides, and decreases the intracellular concentration of dUTP so that uracil cannot be incorporated into DNA. The chain is Deoxyuridine 5'-triphosphate nucleotidohydrolase (DUT1) from Kluyveromyces lactis (strain ATCC 8585 / CBS 2359 / DSM 70799 / NBRC 1267 / NRRL Y-1140 / WM37) (Yeast).